The following is a 958-amino-acid chain: Dermatan-sulfate epimerase (958 aa).

Positions 1–22 (MRTHTRGAPSVFFICLFCFVSA) are cleaved as a signal peptide. At 23–902 (CVTDENPEVM…APALSASYTR (880 aa)) the chain is on the lumenal side. N-linked (GlcNAc...) asparagine glycosylation occurs at Asn183. His205 (proton donor) is an active-site residue. Tyr261 is an active-site residue. 2 N-linked (GlcNAc...) asparagine glycosylation sites follow: Asn336 and Asn411. Mn(2+) contacts are provided by His452 and Glu470. Tyr473 is a catalytic residue. Asn481 contacts Mn(2+). 2 N-linked (GlcNAc...) asparagine glycosylation sites follow: Asn642 and Asn648. A helical transmembrane segment spans residues 903–923 (LFLILNIAIFFVMLAMQLTYF). The Cytoplasmic portion of the chain corresponds to 924–933 (QRAQSLHGQR). Residues 934–954 (CLYAVLLIDSCILLWLYSSCS) form a helical membrane-spanning segment. The Lumenal segment spans residues 955–958 (QSQC).

The protein belongs to the dermatan-sulfate isomerase family. Mn(2+) is required as a cofactor. In terms of processing, N-glycosylated. Glycosylation is important for enzymatic activity.

The protein resides in the endoplasmic reticulum membrane. It localises to the golgi apparatus membrane. The protein localises to the cytoplasmic vesicle membrane. It is found in the microsome membrane. It carries out the reaction chondroitin 4'-sulfate = dermatan 4'-sulfate. It functions in the pathway glycan metabolism; chondroitin sulfate biosynthesis. Its pathway is glycan metabolism; heparan sulfate biosynthesis. Functionally, converts D-glucuronic acid to L-iduronic acid (IdoUA) residues. Plays an important role in the biosynthesis of the glycosaminoglycan/mucopolysaccharide dermatan sulfate. The protein is Dermatan-sulfate epimerase (DSE) of Bos taurus (Bovine).